The following is a 450-amino-acid chain: Asparagine--tRNA ligase (450 aa).

The protein belongs to the class-II aminoacyl-tRNA synthetase family. In terms of assembly, homodimer.

The protein resides in the cytoplasm. The enzyme catalyses tRNA(Asn) + L-asparagine + ATP = L-asparaginyl-tRNA(Asn) + AMP + diphosphate + H(+). This chain is Asparagine--tRNA ligase, found in Metamycoplasma arthritidis (strain 158L3-1) (Mycoplasma arthritidis).